The chain runs to 199 residues: Probable NADH dehydrogenase [ubiquinone] iron-sulfur protein 7, mitochondrial (199 aa).

The transit peptide at 1 to 16 directs the protein to the mitochondrion; the sequence is MLSALRTAGALSTRRL. Positions 74, 75, 139, and 169 each coordinate [4Fe-4S] cluster.

The protein belongs to the complex I 20 kDa subunit family. In terms of assembly, complex I is composed of 45 different subunits This is a component of the iron-sulfur (IP) fragment of the enzyme. The cofactor is [4Fe-4S] cluster.

It localises to the mitochondrion. The catalysed reaction is a ubiquinone + NADH + 5 H(+)(in) = a ubiquinol + NAD(+) + 4 H(+)(out). Its function is as follows. Core subunit of the mitochondrial membrane respiratory chain NADH dehydrogenase (Complex I) that is believed to belong to the minimal assembly required for catalysis. Complex I functions in the transfer of electrons from NADH to the respiratory chain. The immediate electron acceptor for the enzyme is believed to be ubiquinone. In Caenorhabditis briggsae, this protein is Probable NADH dehydrogenase [ubiquinone] iron-sulfur protein 7, mitochondrial.